We begin with the raw amino-acid sequence, 1183 residues long: DNA-directed RNA polymerase subunit beta (1183 aa).

The interval 1155-1183 is disordered; it reads ADVDEDDVNEHKVNIQQSSIPESQKETTD.

It belongs to the RNA polymerase beta chain family. As to quaternary structure, the RNAP catalytic core consists of 2 alpha, 1 beta, 1 beta' and 1 omega subunit. When a sigma factor is associated with the core the holoenzyme is formed, which can initiate transcription.

It catalyses the reaction RNA(n) + a ribonucleoside 5'-triphosphate = RNA(n+1) + diphosphate. Its function is as follows. DNA-dependent RNA polymerase catalyzes the transcription of DNA into RNA using the four ribonucleoside triphosphates as substrates. The polypeptide is DNA-directed RNA polymerase subunit beta (Staphylococcus carnosus (strain TM300)).